The chain runs to 304 residues: CBY1-interacting BAR domain-containing protein 2 (304 aa).

The segment at 6–217 (SRDSQVRVME…EKYDLERDLL (212 aa)) is BAR-like.

It belongs to the CIBAR family. Homodimer (via BAR-like domain). Heterodimer (via BAR-like domain) with FAM92A. Interacts with CBY1. In terms of tissue distribution, restricted to certain tissues, most prominently expressed in multicilaited tissues.

Its subcellular location is the cytoplasm. The protein localises to the cytoskeleton. The protein resides in the microtubule organizing center. It is found in the centrosome. It localises to the centriole. Its subcellular location is the cilium basal body. Functionally, may play a role in ciliogenesis. In cooperation with CBY1 may facilitate ciliogenesis likely by the recruitment and fusion of endosomal vesicles at distal appendages during early stages of ciliogenesis. This Homo sapiens (Human) protein is CBY1-interacting BAR domain-containing protein 2.